A 323-amino-acid chain; its full sequence is Small ribosomal subunit protein uS2 (323 aa).

Residues 295-323 form a disordered region; sequence VVNRDRAGFNKKQPKAEEAAKPAEKKAEK.

This sequence belongs to the universal ribosomal protein uS2 family.

The chain is Small ribosomal subunit protein uS2 from Mycoplasmoides gallisepticum (strain R(low / passage 15 / clone 2)) (Mycoplasma gallisepticum).